Here is a 153-residue protein sequence, read N- to C-terminus: Cofilin (153 aa).

The ADF-H domain maps to 15-147 (GVAVNDSALQ…AYESVLERVS (133 aa)).

The protein belongs to the actin-binding proteins ADF family.

It is found in the cytoplasm. Its subcellular location is the cytoskeleton. The protein resides in the nucleus matrix. In terms of biological role, controls reversibly actin polymerization and depolymerization in a pH-sensitive manner. It has the ability to bind G- and F-actin in a 1:1 ratio of cofilin to actin. Binding to F-actin is regulated by tropomyosin. It is the major component of intranuclear and cytoplasmic actin rods. Required for accumulation of actin at the cell division site via depolymerizing actin at the cell ends. In association with myosin II has a role in the assembly of the contractile ring via severing actin filaments. Involved in the maintenance of the contractile ring once formed. In association with profilin and capping protein, has a role in the mitotic reorganization of the actin cytoskeleton. This chain is Cofilin (COF1), found in Yarrowia lipolytica (strain CLIB 122 / E 150) (Yeast).